Here is a 691-residue protein sequence, read N- to C-terminus: Gex-3-interacting protein 13 (691 aa).

Disordered regions lie at residues 18-97 (TASL…SAHL) and 171-195 (PASP…KRQR). Positions 31–46 (SSFTTTSESTSPPYSS) are enriched in low complexity. The span at 47-57 (SEHHSPTDQRT) shows a compositional bias: basic and acidic residues. Residues 58–79 (ETPTSDSGNASFSPENVATSFE) show a composition bias toward polar residues. Positions 171–183 (PASPCTTAASAPS) are enriched in low complexity. BED-type zinc fingers lie at residues 194–242 (QRRN…YEKV) and 424–473 (LRRH…YEKV). Zn(2+) is bound by residues cysteine 212, cysteine 215, histidine 230, histidine 235, cysteine 443, cysteine 446, histidine 461, and histidine 466.

Interacts with gex-3.

The chain is Gex-3-interacting protein 13 (gei-13) from Caenorhabditis elegans.